Here is a 1388-residue protein sequence, read N- to C-terminus: DNA-directed RNA polymerase subunit beta' (1388 aa).

Zn(2+) is bound by residues Cys-70, Cys-72, Cys-85, and Cys-88. Asp-461, Asp-463, and Asp-465 together coordinate Mg(2+). Cys-808, Cys-882, Cys-889, and Cys-892 together coordinate Zn(2+).

It belongs to the RNA polymerase beta' chain family. The RNAP catalytic core consists of 2 alpha, 1 beta, 1 beta' and 1 omega subunit. When a sigma factor is associated with the core the holoenzyme is formed, which can initiate transcription. Mg(2+) is required as a cofactor. It depends on Zn(2+) as a cofactor.

The enzyme catalyses RNA(n) + a ribonucleoside 5'-triphosphate = RNA(n+1) + diphosphate. Its function is as follows. DNA-dependent RNA polymerase catalyzes the transcription of DNA into RNA using the four ribonucleoside triphosphates as substrates. This chain is DNA-directed RNA polymerase subunit beta', found in Acidiphilium cryptum (strain JF-5).